We begin with the raw amino-acid sequence, 1161 residues long: Hamartin (1161 aa).

K30 participates in a covalent cross-link: Glycyl lysine isopeptide (Lys-Gly) (interchain with G-Cter in ubiquitin). 2 disordered regions span residues 296–336 (PYVD…PSTR) and 353–591 (CGMT…QRGV). Low complexity predominate over residues 303–336 (SYGGSTSTPSSSSRLMLFSPPGQLPQSLSSPSTR). Positions 393–402 (TSPPPAPPCP) are enriched in pro residues. Residues 403 to 784 (QDDCVHGSAA…QIRQLQHDRE (382 aa)) form a mediates interaction with WDR45B region. The segment covering 471 to 484 (EKDKEEAAISKELS) has biased composition (basic and acidic residues). A phosphoserine mark is found at S484, S502, S508, S518, S592, and S595. A compositionally biased stretch (polar residues) spans 509-529 (LSGSQRKTHSAASGTQGSSVN). Coiled-coil stretches lie at residues 721–849 (IRAA…NRQL), 879–917 (TAYRKELEKNRSHLLQQNQRLDASQRRVLELESLLAKKD), and 967–991 (EKDGRLRKLEEDRAEAAEAAEERLD). Disordered stretches follow at residues 1003 to 1077 (GHNE…SLPS) and 1092 to 1161 (NKSE…PEHS). Positions 1004–1017 (HNEEASGHNGETRT) are enriched in basic and acidic residues. The span at 1026–1043 (SCGGRVTGGSSSSSSELS) shows a compositional bias: low complexity. Over residues 1064–1077 (PSSSIPTTVGSLPS) the composition is skewed to polar residues. S1094 is modified (phosphoserine). Residues 1103-1113 (VTMSSSSLSET) show a composition bias toward low complexity. Basic and acidic residues-rich tracts occupy residues 1114 to 1124 (LKTELGKDSGT) and 1152 to 1161 (DYNETHPEHS).

In terms of assembly, component of the TSC-TBC complex (also named Rhebulator complex), composed of 2 molecules of TSC1, 2 molecules of TSC2 and 1 molecule of TBC1D7. Probably forms a complex composed of chaperones HSP90 and HSP70, co-chaperones STIP1/HOP, CDC37, PPP5C, PTGES3/p23, TSC1 and client protein TSC2. Forms a complex composed of chaperones HSP90 and HSP70, co-chaperones CDC37, PPP5C, TSC1 and client protein TSC2, CDK4, AKT, RAF1 and NR3C1; this complex does not contain co-chaperones STIP1/HOP and PTGES3/p23. Forms a complex containing HSP90AA1, TSC1 and TSC2; TSC1 is required to recruit TCS2 to the complex. Interacts (via C-terminus) with the closed form of HSP90AA1 (via the middle domain and TPR repeat-binding motif). Interacts with DOCK7. Interacts with FBXW5. Interacts with WDR45B. Interacts with RPAP3 and URI1. In terms of processing, phosphorylation at Ser-502 does not affect interaction with TSC2. Post-translationally, 'Lys-63'-linked ubiquitinated at Lys-30 by PELI1; the ubiquitination promotes TSC1/TSC2 complex stability.

The protein resides in the lysosome membrane. It is found in the cytoplasm. It localises to the cytosol. In terms of biological role, non-catalytic component of the TSC-TBC complex, a multiprotein complex that acts as a negative regulator of the canonical mTORC1 complex, an evolutionarily conserved central nutrient sensor that stimulates anabolic reactions and macromolecule biosynthesis to promote cellular biomass generation and growth. The TSC-TBC complex acts as a GTPase-activating protein (GAP) for the small GTPase RHEB, a direct activator of the protein kinase activity of mTORC1. In absence of nutrients, the TSC-TBC complex inhibits mTORC1, thereby preventing phosphorylation of ribosomal protein S6 kinase (RPS6KB1 and RPS6KB2) and EIF4EBP1 (4E-BP1) by the mTORC1 signaling. The TSC-TBC complex is inactivated in response to nutrients, relieving inhibition of mTORC1. Within the TSC-TBC complex, TSC1 stabilizes TSC2 and prevents TSC2 self-aggregation. Involved in microtubule-mediated protein transport via its ability to regulate mTORC1 signaling. Also acts as a co-chaperone for HSP90AA1 facilitating HSP90AA1 chaperoning of protein clients such as kinases, TSC2 and glucocorticoid receptor NR3C1. Increases ATP binding to HSP90AA1 and inhibits HSP90AA1 ATPase activity. Competes with the activating co-chaperone AHSA1 for binding to HSP90AA1, thereby providing a reciprocal regulatory mechanism for chaperoning of client proteins. Recruits TSC2 to HSP90AA1 and stabilizes TSC2 by preventing the interaction between TSC2 and ubiquitin ligase HERC1. This is Hamartin from Mus musculus (Mouse).